Here is a 76-residue protein sequence, read N- to C-terminus: Omega/Kappa-hexatoxin-Hv1h (76 aa).

The signal sequence occupies residues 1 to 22 (MNTATGFIVLLVLATILGGIEA). A propeptide spanning residues 23 to 35 (GESHMRKDAMGRV) is cleaved from the precursor. Disulfide bonds link Cys40–Cys55, Cys47–Cys60, and Cys54–Cys74.

It belongs to the neurotoxin 08 (Shiva) family. 02 (omega/kappa toxin) subfamily. In terms of tissue distribution, expressed by the venom gland.

Its subcellular location is the secreted. Its function is as follows. Toxin that may inhibit ion channels. The protein is Omega/Kappa-hexatoxin-Hv1h of Hadronyche versuta (Blue mountains funnel-web spider).